Here is a 320-residue protein sequence, read N- to C-terminus: Cytochrome f (320 aa).

The signal sequence occupies residues Met1 to Ala35. Heme contacts are provided by Tyr36, Cys56, Cys59, and His60. Residues Ile286–Lys306 form a helical membrane-spanning segment.

This sequence belongs to the cytochrome f family. The 4 large subunits of the cytochrome b6-f complex are cytochrome b6, subunit IV (17 kDa polypeptide, petD), cytochrome f and the Rieske protein, while the 4 small subunits are PetG, PetL, PetM and PetN. The complex functions as a dimer. Heme is required as a cofactor.

The protein localises to the plastid. The protein resides in the chloroplast thylakoid membrane. Its function is as follows. Component of the cytochrome b6-f complex, which mediates electron transfer between photosystem II (PSII) and photosystem I (PSI), cyclic electron flow around PSI, and state transitions. The chain is Cytochrome f from Dioscorea elephantipes (Elephant's foot yam).